Reading from the N-terminus, the 83-residue chain is Small ribosomal subunit protein eS21 (83 aa).

This sequence belongs to the eukaryotic ribosomal protein eS21 family. As to quaternary structure, component of the 40S small ribosomal subunit. Interacts with sta.

It is found in the cytoplasm. The protein resides in the cytosol. It localises to the rough endoplasmic reticulum. In terms of biological role, may be an associated component of the ribosome rather than a core structural subunit. May act as a translation initiation factor. Has a role in regulation of cell proliferation in the hematopoietic organs and the imaginal disks of larva. The chain is Small ribosomal subunit protein eS21 (RpS21) from Drosophila grimshawi (Hawaiian fruit fly).